Here is a 468-residue protein sequence, read N- to C-terminus: Uronate isomerase (468 aa).

Belongs to the metallo-dependent hydrolases superfamily. Uronate isomerase family.

It catalyses the reaction D-glucuronate = D-fructuronate. The catalysed reaction is aldehydo-D-galacturonate = keto-D-tagaturonate. It functions in the pathway carbohydrate metabolism; pentose and glucuronate interconversion. In Bacteroides fragilis (strain ATCC 25285 / DSM 2151 / CCUG 4856 / JCM 11019 / LMG 10263 / NCTC 9343 / Onslow / VPI 2553 / EN-2), this protein is Uronate isomerase.